A 293-amino-acid polypeptide reads, in one-letter code: MLLLETHNRILYDEVISHFEGDRRVNNIFADFDGVKFNVQTSDDKSSLMVSVSLHAAADLLKNGGSALLKSVYGDMLQAKPEGGYDVTLVIQSSFSGNKEELAKKVSLLKRHLVAAPFLMVFEGIEAKKPLPEIIAINYRTDETFYLKPQGDNVIVIFDIAFKDADDVILSKIFLQSFVDVRKTISNVPSITFSQKDPPLELKGVKGVRAGQANHGFVSFVLFPAHIKKPQESADLIQTFRDYLHYHIKCAKGYMHTSMRNRVESLIQVLNRAKPEPVNTVKRTITGKFFKQN.

It belongs to the ARPC2 family. In terms of assembly, component of the Arp2/3 complex composed of arpB/Arp2, arpC/Arp3, arcA/p41-arc, arcB/p34-arc, arcC/p21-arc, arcD/p20-arc and arcE/p16-arc. Interacts with carmil (via the region between the LRR domain and COOH-terminal proline-rich domain); carmil is required for Arp2/3-dependent actin nucleation. Arp2/3 complex, MyoB, MyoC, and the alpha and beta subunits of capping protein all form a larger complex with carmil.

Its subcellular location is the cytoplasm. The protein resides in the cytoskeleton. The protein localises to the cell projection. It localises to the cytosol. It is found in the cell cortex. Its subcellular location is the pseudopodium. Its function is as follows. Functions as a component of the Arp2/3 complex which is involved in regulation of actin polymerization and together with an activating nucleation-promoting factor (NPF) mediates the formation of branched actin networks. Seems to contact the pointed end of the daughter actin filament. The Arp2/3 complex is involved in organizing the actin system in cell motility and chemotaxis, in phagocytosis and macropinocytosis, at late steps of endosome processing, and in mitosis. In concert with a group of other proteins, the Arp2/3 complex plays a general role in the rapid activation and adaptation of the actin system to its multiple functions. The chain is Actin-related protein 2/3 complex subunit 2 (arcB) from Dictyostelium discoideum (Social amoeba).